A 241-amino-acid chain; its full sequence is Interleukin-6 (241 aa).

The N-terminal stretch at 1-26 is a signal peptide; that stretch reads MNSFTSALRPGPLGCSLALLLVVATA. The segment at 32–51 is disordered; that stretch reads PVREDSNTKASPDKTLTPPG. Cystine bridges form between Cys-72–Cys-78 and Cys-101–Cys-111. Asn-108 is a glycosylation site (N-linked (GlcNAc...) asparagine).

It belongs to the IL-6 superfamily. As to quaternary structure, component of a hexamer of two molecules each of IL6, IL6R and IL6ST; first binds to IL6R to associate with the signaling subunit IL6ST. Interacts with IL6R (via the N-terminal ectodomain); this interaction may be affected by IL6R-binding with SORL1, hence decreasing IL6 cis signaling. Interacts with SORL1 (via the N-terminal ectodomain); this interaction leads to IL6 internalization and lysosomal degradation. May form a trimeric complex with the soluble SORL1 ectodomain and soluble IL6R receptor; this interaction might stabilize circulating IL6, hence promoting IL6 trans signaling.

Its subcellular location is the secreted. Cytokine with a wide variety of biological functions in immunity, tissue regeneration, and metabolism. Binds to IL6R, then the complex associates to the signaling subunit IL6ST/gp130 to trigger the intracellular IL6-signaling pathway. The interaction with the membrane-bound IL6R and IL6ST stimulates 'classic signaling', whereas the binding of IL6 and soluble IL6R to IL6ST stimulates 'trans-signaling'. Alternatively, 'cluster signaling' occurs when membrane-bound IL6:IL6R complexes on transmitter cells activate IL6ST receptors on neighboring receiver cells. Functionally, IL6 is a potent inducer of the acute phase response. Rapid production of IL6 contributes to host defense during infection and tissue injury, but excessive IL6 synthesis is involved in disease pathology. In the innate immune response, is synthesized by myeloid cells, such as macrophages and dendritic cells, upon recognition of pathogens through toll-like receptors (TLRs) at the site of infection or tissue injury. In the adaptive immune response, is required for the differentiation of B cells into immunoglobulin-secreting cells. Plays a major role in the differentiation of CD4(+) T cell subsets. Essential factor for the development of T follicular helper (Tfh) cells that are required for the induction of germinal-center formation. Required to drive naive CD4(+) T cells to the Th17 lineage. Also required for proliferation of myeloma cells and the survival of plasmablast cells. Its function is as follows. Acts as an essential factor in bone homeostasis and on vessels directly or indirectly by induction of VEGF, resulting in increased angiogenesis activity and vascular permeability. Induces, through 'trans-signaling' and synergistically with IL1B and TNF, the production of VEGF. Involved in metabolic controls, is discharged into the bloodstream after muscle contraction increasing lipolysis and improving insulin resistance. 'Trans-signaling' in central nervous system also regulates energy and glucose homeostasis. Mediates, through GLP-1, crosstalk between insulin-sensitive tissues, intestinal L cells and pancreatic islets to adapt to changes in insulin demand. Also acts as a myokine. Plays a protective role during liver injury, being required for maintenance of tissue regeneration. Also has a pivotal role in iron metabolism by regulating HAMP/hepcidin expression upon inflammation or bacterial infection. Through activation of IL6ST-YAP-NOTCH pathway, induces inflammation-induced epithelial regeneration. The polypeptide is Interleukin-6 (IL6) (Oryctolagus cuniculus (Rabbit)).